Consider the following 427-residue polypeptide: DEAD-box ATP-dependent RNA helicase 56 (427 aa).

Residues 1-30 (MGDARDNEAYEEELLDYEEEDEKVPDSGNK) are disordered. A compositionally biased stretch (acidic residues) spans 9 to 23 (AYEEELLDYEEEDEK). The short motif at 46–74 (SGFRDFLLKPELLRAIVDSGFEHPSEVQH) is the Q motif element. The Helicase ATP-binding domain occupies 77–250 (IPQAILGMDV…KKFMQDPMEI (174 aa)). 90-97 (AKSGMGKT) serves as a coordination point for ATP. Residues 197–200 (DECD) carry the DECD box motif. Residues 278 to 423 (KLNDLLDALD…ELPEQIDTST (146 aa)) form the Helicase C-terminal domain.

The protein belongs to the DEAD box helicase family. DECD subfamily. In terms of assembly, interacts with ALY2 and MOS11.

The protein localises to the nucleus. It catalyses the reaction ATP + H2O = ADP + phosphate + H(+). In terms of biological role, ATP-dependent RNA helicase involved in pre-mRNA splicing. Required for the export of mRNA out of the nucleus. In addition to ssRNA and dsRNA, binds dsDNA, but not ssDNA. This Arabidopsis thaliana (Mouse-ear cress) protein is DEAD-box ATP-dependent RNA helicase 56 (RH56).